Consider the following 343-residue polypeptide: Lumican (343 aa).

The signal sequence occupies residues 1–18 (MTLNSLPIFLVLISGIFC). Residue Gln19 is modified to Pyrrolidone carboxylic acid. 2 positions are modified to sulfotyrosine: Tyr20 and Tyr22. The region spanning 31-69 (DPFGPSTAVCAPECNCPLSYPTAMYCDNLKLKTIPIVPS) is the LRRNT domain. LRR repeat units lie at residues 70–91 (GIKYLYLRNNMIEAIEENTFDN), 94–117 (DLQWLILDHNHLENSKIKGRVFSK), 120–140 (NLKKLHINYNNLTEAVGPLPK), 141–162 (TLDDLQLSHNKITKVNPGALEG), 165–186 (NLTVIHLQNNQLKTDSISGAFK), 190–211 (SLLYLDLSFNQLTKLPTGLPHS), 212–232 (LLMLYFDNNQISNIPDEYFQG), and 235–255 (TLQYLRLSHNKLTDSGIPGNV). Asn91 is a glycosylation site (N-linked (GlcNAc...) (keratan sulfate) asparagine). N-linked (GlcNAc...) (keratan sulfate) asparagine glycosylation is present at Asn130. An N-linked (GlcNAc...) (keratan sulfate) asparagine glycan is attached at Asn165. The N-linked (GlcNAc...) (keratan sulfate) asparagine glycan is linked to Asn257. LRR repeat units follow at residues 260 to 281 (SLVELDLSFNQLKSIPTVSENL), 282 to 301 (ENFYLQVNKINKFPLSSFCK), and 310 to 330 (KITHLRLDGNNLTRADLPQEM). Cys300 and Cys333 are joined by a disulfide. N-linked (GlcNAc...) asparagine glycosylation occurs at Asn320.

This sequence belongs to the small leucine-rich proteoglycan (SLRP) family. SLRP class II subfamily. Binds to laminin. Post-translationally, contains keratan sulfate. As to expression, cornea and other tissues.

The protein localises to the secreted. Its subcellular location is the extracellular space. It is found in the extracellular matrix. The chain is Lumican (LUM) from Gallus gallus (Chicken).